Here is a 148-residue protein sequence, read N- to C-terminus: MDVILLQRIKNLGKLGDKVSVKAGYGRNFLIPQGKAVAATEANTAAFEARRAELEKQEAEVLAAAQARAEQLNEVNIVITAKAGDEGKLFGSIGTRDIADALTNAGLTVDRAEVRLPNGALRHTGEFNIAIQLHHDVVAEVLVTIVSE.

The protein belongs to the bacterial ribosomal protein bL9 family.

Its function is as follows. Binds to the 23S rRNA. The polypeptide is Large ribosomal subunit protein bL9 (Acinetobacter baumannii (strain AB307-0294)).